The sequence spans 2298 residues: Non-reducing polyketide synthase pgmA (2298 aa).

Residues 8–333 (LFIFGDQTLD…IYNVLKQSPL (326 aa)) are N-terminal acylcarrier protein transacylase domain (SAT). The disordered stretch occupies residues 336–361 (YLSSKPAQSRQPVSNEGAPEPGNGRQ). The segment covering 340–349 (KPAQSRQPVS) has biased composition (polar residues). One can recognise a Ketosynthase family 3 (KS3) domain in the interval 360-798 (RQKLAIIGMS…GGNSALLVED (439 aa)). Residues C532, H667, and H714 each act as for beta-ketoacyl synthase activity in the active site. The segment at 901 to 1193 (VFAFTGQGAH…GMVKGVLGPQ (293 aa)) is acyl/malonyl transferases. Catalysis depends on S994, which acts as the For acyl/malonyl transferase activity. The N-terminal hotdog fold stretch occupies residues 1283-1415 (HRVVEETHDS…CVVRFRDRGL (133 aa)). In terms of domain architecture, PKS/mFAS DH spans 1283 to 1589 (HRVVEETHDS…IQGVPRRVLK (307 aa)). The tract at residues 1294–1586 (KTRIVIEADI…QISIQGVPRR (293 aa)) is product template (PT) domainn. Catalysis depends on H1315, which acts as the Proton acceptor; for dehydratase activity. Positions 1438 to 1589 (VTGETARFNR…IQGVPRRVLK (152 aa)) are C-terminal hotdog fold. The Proton donor; for dehydratase activity role is filled by D1502. Residues 1619–1642 (YPVANGHAQATPTSGPVNGEPRPS) form a disordered region. Residues 1641–1716 (PSRFPRALEI…SLRALLSEPE (76 aa)) form the Carrier 1 domain. Position 1675 is an O-(pantetheine 4'-phosphoryl)serine (S1675). Residues 1716–1762 (ERSTNGMPAASAKDTSRFDEIPPMNGHKTNGHVMNGHSNGSSNGLPD) are disordered. Residues 1751-1760 (GHSNGSSNGL) show a composition bias toward polar residues. Positions 1765–1840 (KVDFQRVLQI…DLKRYLFPQD (76 aa)) constitute a Carrier 2 domain. At S1799 the chain carries O-(pantetheine 4'-phosphoryl)serine. The reductase (R) domain stretch occupies residues 1927–2178 (VTGASGSLGG…YWTPVEEVAG (252 aa)).

Its pathway is pigment biosynthesis. The protein operates within secondary metabolite biosynthesis. Functionally, non-reducing polyketide synthase; part of the gene cluster that mediates the biosynthesis of pleosporalin A, ascomycone A, as well as a third cryptic naphthoquinone derived pigment, all responsible for the coloration of conidia. The non-reducing polyketide synthase pgmA is responsible for the condensation of seven acetyl-CoA units to produce the cyclized heptaketide 3-acetonyl-1,6,8-trihydroxy-2-naphthaldehyde. The pathway begins with the biosynthesis of the cyclized heptaketide 3-acetonyl-1,6,8-trihydroxy-2-naphthaldehyde by the NR-PKS pgmA. The C-6 hydroxyl group is further methylated by the O-methyltransferase pgmB to yield fusarubinaldehyde which is in turn oxidized by the cytochrome P450 monooxygenase pgmC at C-9. The C-1 hydroxyl group is then methylated spontaneously. Although pgmE, pgmD and pgmH are essential for the production of pleosporalin A, it is not the case for the 2 other final products and it remains difficult to assign a specific function to each enzyme. PgmF and pgmG seem not to be involved in pigment biosynthesis although they were regulated by the cluster-specific transcription factor pgmR. This chain is Non-reducing polyketide synthase pgmA, found in Aspergillus terreus (strain NIH 2624 / FGSC A1156).